Consider the following 176-residue polypeptide: Probable inosine/xanthosine triphosphatase (176 aa).

Asp36 serves as a coordination point for Mg(2+).

It belongs to the YjjX NTPase family. Homodimer. It depends on Mg(2+) as a cofactor. Mn(2+) is required as a cofactor.

It carries out the reaction XTP + H2O = XDP + phosphate + H(+). The catalysed reaction is ITP + H2O = IDP + phosphate + H(+). In terms of biological role, phosphatase that hydrolyzes non-canonical purine nucleotides such as XTP and ITP to their respective diphosphate derivatives. Probably excludes non-canonical purines from DNA/RNA precursor pool, thus preventing their incorporation into DNA/RNA and avoiding chromosomal lesions. The sequence is that of Probable inosine/xanthosine triphosphatase from Saccharolobus islandicus (strain M.14.25 / Kamchatka #1) (Sulfolobus islandicus).